Reading from the N-terminus, the 542-residue chain is Excitatory amino acid transporter 1 (542 aa).

Residues 1 to 47 lie on the Cytoplasmic side of the membrane; that stretch reads MTKSNGEEARLGGRMERFQQGVRKRTLLAKKKVQNITKEDVKSYLFR. A helical transmembrane segment spans residues 48–68; the sequence is NAFVLLTVTAVIVGTILGFTL. Residues 69–86 are Extracellular-facing; it reads RPYRMSYREVKYFSFPGE. The chain crosses the membrane as a helical span at residues 87–108; it reads LLMRMLQMLVLPLIISSLVTGM. Over 109–122 the chain is Cytoplasmic; the sequence is AALDSKASGKMGMR. A helical transmembrane segment spans residues 123-145; that stretch reads AVVYYMTTTIIAVVIGIIIVIII. The Extracellular portion of the chain corresponds to 146-236; it reads HPGKGTKENM…ITEELVPVPG (91 aa). Residues 237–260 form a helical membrane-spanning segment; that stretch reads SVNGVNALGLVVFSMCFGFVIGNM. At 261 to 269 the chain is on the cytoplasmic side; it reads KEQGQALRE. The chain crosses the membrane as a helical span at residues 270–297; the sequence is FFDSLNEAIMRLVAVIMWYAPLGILFLI. Over 298–318 the chain is Extracellular; that stretch reads AGKIVEMEDMGVIGGQLAMYT. Residues 319 to 340 traverse the membrane as a helical segment; that stretch reads VTVIVGLLIHAVIVLPLLYFLV. Topologically, residues 341–345 are cytoplasmic; it reads TRKNP. The discontinuously helical intramembrane region spans 346 to 376; that stretch reads WVFIGGLLQALITALGTSSSSATLPITFKCL. Residue 363-365 coordinates L-aspartate; it reads SSS. The Cytoplasmic portion of the chain corresponds to 377–385; the sequence is EENNGVDKR. A helical transmembrane segment spans residues 386–412; sequence VTRFVLPVGATINMDGTALYEALAAIF. Na(+)-binding residues include glycine 394, threonine 396, and asparagine 398. Threonine 402 is an L-aspartate binding site. The Extracellular segment spans residues 413-425; the sequence is IAQVNNFELNFGQ. An intramembrane region (discontinuously helical) is located at residues 426–459; the sequence is IITISITATAASIGAAGIPQAGLVTMVIVLTSVG. 443–447 lines the L-aspartate pocket; sequence IPQAG. Over 460–472 the chain is Extracellular; it reads LPTDDITLIIAVD. A helical transmembrane segment spans residues 473–494; the sequence is WFLDRLRTTTNVLGDSLGAGIV. 2 residues coordinate L-aspartate: aspartate 476 and asparagine 483. Na(+)-binding residues include asparagine 483 and aspartate 487. Topologically, residues 495–542 are cytoplasmic; it reads EHLSRHELKNRDVEMGNSVIEENEMKKPYQLISQESEIEKSMDSETKM. Serine 512 carries the phosphoserine modification.

It belongs to the dicarboxylate/amino acid:cation symporter (DAACS) (TC 2.A.23) family. SLC1A3 subfamily. As to quaternary structure, homotrimer. Glycosylated.

The protein resides in the cell membrane. The enzyme catalyses K(+)(in) + L-glutamate(out) + 3 Na(+)(out) + H(+)(out) = K(+)(out) + L-glutamate(in) + 3 Na(+)(in) + H(+)(in). It carries out the reaction K(+)(in) + L-aspartate(out) + 3 Na(+)(out) + H(+)(out) = K(+)(out) + L-aspartate(in) + 3 Na(+)(in) + H(+)(in). The catalysed reaction is D-aspartate(out) + K(+)(in) + 3 Na(+)(out) + H(+)(out) = D-aspartate(in) + K(+)(out) + 3 Na(+)(in) + H(+)(in). Sodium-dependent, high-affinity amino acid transporter that mediates the uptake of L-glutamate and also L-aspartate and D-aspartate. Functions as a symporter that transports one amino acid molecule together with two or three Na(+) ions and one proton, in parallel with the counter-transport of one K(+) ion. Plays a redundant role in the rapid removal of released glutamate from the synaptic cleft, which is essential for terminating the postsynaptic action of glutamate. The polypeptide is Excitatory amino acid transporter 1 (SLC1A3) (Bos taurus (Bovine)).